Reading from the N-terminus, the 432-residue chain is Adenylosuccinate synthetase (432 aa).

GTP-binding positions include 12–18 and 40–42; these read GDEGKGK and GHT. Catalysis depends on Asp-13, which acts as the Proton acceptor. Positions 13 and 40 each coordinate Mg(2+). Residues 13-16, 38-41, Thr-129, Arg-143, Gln-224, Thr-239, and Arg-303 contribute to the IMP site; these read DEGK and NAGH. His-41 acts as the Proton donor in catalysis. A substrate-binding site is contributed by 299 to 305; sequence VTTGRRR. GTP contacts are provided by residues Arg-305, 331 to 333, and 413 to 415; these read KLD and GVG.

This sequence belongs to the adenylosuccinate synthetase family. Homodimer. Mg(2+) is required as a cofactor.

It is found in the cytoplasm. It carries out the reaction IMP + L-aspartate + GTP = N(6)-(1,2-dicarboxyethyl)-AMP + GDP + phosphate + 2 H(+). It functions in the pathway purine metabolism; AMP biosynthesis via de novo pathway; AMP from IMP: step 1/2. In terms of biological role, plays an important role in the de novo pathway of purine nucleotide biosynthesis. Catalyzes the first committed step in the biosynthesis of AMP from IMP. This Mycobacterium avium (strain 104) protein is Adenylosuccinate synthetase.